We begin with the raw amino-acid sequence, 261 residues long: Bcl-2-binding component 3, isoforms 3/4 (261 aa).

A disordered region spans residues 27-261; it reads QICGPRERHG…ASAGDFLCTM (235 aa). Low complexity predominate over residues 40–50; the sequence is PGGQLPGARRG. The span at 53-63 shows a compositional bias: pro residues; it reads PRRPAPLPARP. Residues 64–73 show a composition bias toward low complexity; that stretch reads PGALGSVLRP. 2 stretches are compositionally biased toward basic residues: residues 74-87 and 95-106; these read LRAR…RPHP and RPHRPTRRHRRP. The segment covering 124–146 has biased composition (low complexity); the sequence is PGRSSALALAGGAAPGVARAQRP. Over residues 147 to 171 the composition is skewed to gly residues; it reads GGSGGRSHPGGPGSPRGGGTVGPGD. Residues 172–197 show a composition bias toward low complexity; it reads RGPAAADGGRPQRTVRAAETRGAAAA.

Does not interact with BCL2.

In terms of biological role, does not affect cell growth. The protein is Bcl-2-binding component 3, isoforms 3/4 (BBC3) of Homo sapiens (Human).